The chain runs to 91 residues: Probable Fe(2+)-trafficking protein (91 aa).

This sequence belongs to the Fe(2+)-trafficking protein family. As to quaternary structure, monomer.

Functionally, could be a mediator in iron transactions between iron acquisition and iron-requiring processes, such as synthesis and/or repair of Fe-S clusters in biosynthetic enzymes. The sequence is that of Probable Fe(2+)-trafficking protein from Escherichia coli O7:K1 (strain IAI39 / ExPEC).